The chain runs to 204 residues: Tat proofreading chaperone DmsD (204 aa).

It belongs to the TorD/DmsD family. DmsD subfamily.

In terms of biological role, required for biogenesis/assembly of DMSO reductase, but not for the interaction of the DmsA signal peptide with the Tat system. May be part of a chaperone cascade complex that facilitates a folding-maturation pathway for the substrate protein. This is Tat proofreading chaperone DmsD from Escherichia coli O6:H1 (strain CFT073 / ATCC 700928 / UPEC).